Consider the following 681-residue polypeptide: Peroxisomal acyl-coenzyme A oxidase 2 (681 aa).

The tract at residues 1–28 (MGNPGDRVSLGETWSREVHPDIDSERHS) is disordered. Residue serine 9 is modified to Phosphoserine. Position 13 is a phosphothreonine (threonine 13). The segment covering 14-28 (WSREVHPDIDSERHS) has biased composition (basic and acidic residues). 6 positions are modified to N6-succinyllysine: lysine 66, lysine 137, lysine 303, lysine 453, lysine 561, and lysine 667. The Microbody targeting signal motif lies at 679–681 (PKL).

This sequence belongs to the acyl-CoA oxidase family. Homodimer. Requires FAD as cofactor. Acetylation of Lys-667 is observed in liver mitochondria from fasted mice but not from fed mice.

The protein resides in the peroxisome. The catalysed reaction is (25R)-3alpha,7alpha,12alpha-trihydroxy-5beta-cholestan-26-oyl-CoA + A + H2O = (24R,25R)-3alpha,7alpha,12alpha,24-tetrahydroxy-5beta-cholestan-26-oyl-CoA + AH2. It carries out the reaction (25S)-3alpha,7alpha,12alpha-trihydroxy-5beta-cholestan-26-oyl-CoA + O2 = (24E)-3alpha,7alpha,12alpha-trihydroxy-5beta-cholest-24-en-26-oyl-CoA + H2O2. In terms of biological role, oxidizes the CoA esters of the bile acid intermediates di- and tri-hydroxycoprostanic acids. Capable of oxidizing short as well as long chain 2-methyl branched fatty acids. This chain is Peroxisomal acyl-coenzyme A oxidase 2, found in Mus musculus (Mouse).